The primary structure comprises 207 residues: MIRIKVCGITNIEDAINISKAGVDALGFILAESPRKVELSKVLEISKELPPFVSRVAVVVNPVKEEIEKIERSKVFDYVQFHGSEDVNIIKNCKLKTIKAIKIENKSSLEEISKYNDFVDYFLFDTKIGEKIGGTGHTFNWEILKEANIKKPFILAGGLSPENIVEAIKTIRPNAVDLNSKVELYPGKKDIRLIKETIDRINSIKIK.

This sequence belongs to the TrpF family.

It carries out the reaction N-(5-phospho-beta-D-ribosyl)anthranilate = 1-(2-carboxyphenylamino)-1-deoxy-D-ribulose 5-phosphate. The protein operates within amino-acid biosynthesis; L-tryptophan biosynthesis; L-tryptophan from chorismate: step 3/5. The chain is N-(5'-phosphoribosyl)anthranilate isomerase from Petrotoga mobilis (strain DSM 10674 / SJ95).